Here is a 342-residue protein sequence, read N- to C-terminus: S-adenosylmethionine:tRNA ribosyltransferase-isomerase (342 aa).

It belongs to the QueA family. In terms of assembly, monomer.

It is found in the cytoplasm. It carries out the reaction 7-aminomethyl-7-carbaguanosine(34) in tRNA + S-adenosyl-L-methionine = epoxyqueuosine(34) in tRNA + adenine + L-methionine + 2 H(+). Its pathway is tRNA modification; tRNA-queuosine biosynthesis. Functionally, transfers and isomerizes the ribose moiety from AdoMet to the 7-aminomethyl group of 7-deazaguanine (preQ1-tRNA) to give epoxyqueuosine (oQ-tRNA). The sequence is that of S-adenosylmethionine:tRNA ribosyltransferase-isomerase from Novosphingobium aromaticivorans (strain ATCC 700278 / DSM 12444 / CCUG 56034 / CIP 105152 / NBRC 16084 / F199).